The chain runs to 362 residues: Terpene synthase 3 (362 aa).

Residues 90 to 95 (DDFLER) carry the DDxx(x)D/E motif motif. The NDxxSxxxD/E motif motif lies at 239–247 (NDCVSYAKE).

This sequence belongs to the terpene synthase family.

The catalysed reaction is (2E,6E)-farnesyl diphosphate = beta-maaliene + diphosphate. The enzyme catalyses (2E,6E)-farnesyl diphosphate = aristolene + diphosphate. It carries out the reaction (2E,6E)-farnesyl diphosphate = calarene + diphosphate. It catalyses the reaction (2E)-geranyl diphosphate = (E)-beta-ocimene + diphosphate. The catalysed reaction is (2E)-geranyl diphosphate = (Z)-beta-ocimene + diphosphate. The enzyme catalyses (2E)-geranyl diphosphate + H2O = linalool + diphosphate. It carries out the reaction (2E)-geranyl diphosphate = beta-myrcene + diphosphate. Functionally, terpene synthase that converts its substrate farnesyl diphosphate (FPP) into an unidentified sesquiterpene as a major product, as well as beta-maaliene, aristolene, calarene and 2 additional unidentified sesquiterpene as minor products. Is also able to convert geranyl diphosphate (GPP) into a mixture of monoterpenes including (Z)-beta-ocimene, (E)-beta-ocimene, allo-ocimene, linalool and beta-myrcene. This Dictyostelium discoideum (Social amoeba) protein is Terpene synthase 3.